Consider the following 29-residue polypeptide: Cyclotide mela-4 (29 aa).

The segment at residues 1–29 (GKPICGETCFKGKCYTPGCTCSYPICKKN) is a cross-link (cyclopeptide (Gly-Asn)). Intrachain disulfides connect Cys-5–Cys-19, Cys-9–Cys-21, and Cys-14–Cys-26.

Post-translationally, this is a cyclic peptide. In terms of processing, contains 3 disulfide bonds.

Its function is as follows. Probably participates in a plant defense mechanism (Potential). Binds to and induces leakage in phospholipd membranes, particularly ones containing 1-palmitoyl-2-oleophosphatidylethanolamine (POPE). In vitro, displays cytotoxicity against cultured cells. Not active against Gram-negative bacterium E.coli ATCC 25922 or Gram-positive bacterium S.aureus ATCC 25923 up to a concentration of 64 uM. This is Cyclotide mela-4 from Melicytus latifolius (Norfolk Island mahoe).